Reading from the N-terminus, the 551-residue chain is Serine/threonine-protein kinase ppk21 (551 aa).

The interval 24–43 (EARGERNPVKPQSSNVVPGT) is disordered. Positions 55–315 (YVFGDIIGDG…TQQIKQFPFF (261 aa)) constitute a Protein kinase domain. ATP contacts are provided by residues 65–67 (SFS) and K84. The segment at 86–131 (LDKKYIVKENKVKYVNIERDSMMRLNGFPGISRLFHTFQDDLKLYY) is PIF-pocket. Residues 134–136 (ELA) and E140 each bind ATP. The active-site Proton acceptor is D179. Positions 183 and 197 each coordinate ATP. At S220 the chain carries Phosphoserine; by autocatalysis. The residue at position 538 (S538) is a Phosphoserine.

Belongs to the protein kinase superfamily. AGC Ser/Thr protein kinase family. PDPK1 subfamily.

It is found in the cytoplasm. The protein resides in the nucleus. Its subcellular location is the cytoskeleton. It localises to the microtubule organizing center. The protein localises to the spindle pole body. It catalyses the reaction L-seryl-[protein] + ATP = O-phospho-L-seryl-[protein] + ADP + H(+). It carries out the reaction L-threonyl-[protein] + ATP = O-phospho-L-threonyl-[protein] + ADP + H(+). This Schizosaccharomyces pombe (strain 972 / ATCC 24843) (Fission yeast) protein is Serine/threonine-protein kinase ppk21 (ppk21).